The chain runs to 820 residues: Protein phosphatase 1 regulatory subunit 29 (820 aa).

A signal peptide spans 1-22 (MLRLGLCAAALLCVCRPGAVRA). Over 23-397 (DCWLIEGDKG…APSTSTTTHY (375 aa)) the chain is Extracellular. Residue Asn54 is glycosylated (N-linked (GlcNAc...) asparagine). LRR repeat units follow at residues 56–77 (TVHD…SLNR), 80–101 (NLTD…AFLG), 104–125 (SLQV…MLRG), 128–149 (RLQF…AFSE), and 152–173 (SLIS…TFAS). N-linked (GlcNAc...) asparagine glycosylation is found at Asn80, Asn85, and Asn117. Positions 185–247 (NPFNCECDLF…ITVLQAKCRN (63 aa)) constitute an LRRCT domain. 2 N-linked (GlcNAc...) asparagine glycosylation sites follow: Asn205 and Asn247. Residues 250–294 (LPARPVSHPTPYSTDAQREPDENSGFNPDEILSVEPPASSTTDAS) form a disordered region. In terms of domain architecture, Fibronectin type-III spans 292-379 (DASAGPAIKL…FNHTCLTFTT (88 aa)). The helical transmembrane segment at 398 to 418 (IMTILGCLFGMVIVLGAVYYC) threads the bilayer. Topologically, residues 419-820 (LRKRRMQEEK…WKGVSAQQKL (402 aa)) are cytoplasmic. Disordered regions lie at residues 508 to 527 (GAGG…LENG) and 589 to 612 (SATG…SSHH). Ser619, Ser668, and Ser672 each carry phosphoserine. Positions 654–677 (TGLAKGDSKYIEKGSPLNSPLDRL) are disordered.

In terms of assembly, interacts with PPP1CA.

The protein resides in the membrane. Its function is as follows. Inhibits phosphatase activity of protein phosphatase 1 (PP1) complexes. In Homo sapiens (Human), this protein is Protein phosphatase 1 regulatory subunit 29 (ELFN2).